Consider the following 512-residue polypeptide: Inosine-5'-monophosphate dehydrogenase (512 aa).

CBS domains follow at residues 110-169 and 173-231; these read FIMK…SAPV and MTRR…PNSS. Residues 268–270 and 318–320 contribute to the NAD(+) site; these read DSS and GMG. Residues Gly-320 and Gly-322 each coordinate K(+). Ser-323 contacts IMP. Cys-325 provides a ligand contact to K(+). The active-site Thioimidate intermediate is Cys-325. IMP-binding positions include 358–360, 381–382, and 405–409; these read DGG, GS, and YRGMG. Catalysis depends on Arg-423, which acts as the Proton acceptor. IMP is bound at residue Gln-435. K(+)-binding residues include Glu-494 and Gly-495. Residues 510–512 carry the Microbody targeting signal motif; the sequence is SKL.

It belongs to the IMPDH/GMPR family. Homotetramer. K(+) serves as cofactor.

It localises to the glycosome. The enzyme catalyses IMP + NAD(+) + H2O = XMP + NADH + H(+). Its pathway is purine metabolism; XMP biosynthesis via de novo pathway; XMP from IMP: step 1/1. Its activity is regulated as follows. Mycophenolic acid (MPA) is a non-competitive inhibitor that prevents formation of the closed enzyme conformation by binding to the same site as the amobile flap. In contrast, mizoribine monophosphate (MZP) is a competitive inhibitor that induces the closed conformation. MPA is a potent inhibitor of mammalian IMPDHs but a poor inhibitor of the bacterial enzymes. MZP is a more potent inhibitor of bacterial IMPDH. Functionally, catalyzes the conversion of inosine 5'-phosphate (IMP) to xanthosine 5'-phosphate (XMP), the first committed and rate-limiting step in the de novo synthesis of guanine nucleotides, and therefore plays an important role in the regulation of cell growth. This Trypanosoma brucei brucei protein is Inosine-5'-monophosphate dehydrogenase.